The primary structure comprises 33 residues: MSDINATRLPIWGIGCNPCVGDEVTALLTRGEA.

A propeptide spanning residues 1–10 (MSDINATRLP) is cleaved from the precursor. Position 11 is a (3R,4R)-4,5-dihydroxyisoleucine; in form alpha-amanitin (Ile11). A (3R,4S)-4-hydroxyisoleucine; in form gamma-amanitin modification is found at Ile11. Residues 11-18 (IWGIGCNP) constitute a cross-link (cyclopeptide (Ile-Pro)). The segment at residues 12–16 (WGIGC) is a cross-link (2'-cysteinyl-6'-hydroxytryptophan sulfoxide (Trp-Cys)). The residue at position 18 (Pro18) is a 4-hydroxyproline. A propeptide spanning residues 19 to 33 (CVGDEVTALLTRGEA) is cleaved from the precursor.

It belongs to the MSDIN fungal toxin family. In terms of processing, processed by the macrocyclase-peptidase enzyme POPB to yield a toxic cyclic decapeptide. POPB first removes 10 residues from the N-terminus. Conformational trapping of the remaining peptide forces the enzyme to release this intermediate rather than proceed to macrocyclization. The enzyme rebinds the remaining peptide in a different conformation and catalyzes macrocyclization of the N-terminal 8 residues.

In terms of biological role, major toxin belonging to the bicyclic octapeptides amatoxins that acts by binding non-competitively to RNA polymerase II and greatly slowing the elongation of transcripts from target promoters. The protein is Alpha-amanitin proprotein of Amanita fuligineoides.